The sequence spans 62 residues: Alkaline proteinase (62 aa).

Residues Gly-1–Ser-62 form the Peptidase S8 domain. Asp-21 acts as the Charge relay system in catalysis.

It localises to the secreted. Its activity is regulated as follows. Inhibited by phenylmethanesulfonyl fluoride (PMSF) and chymostatin (CST), but not by Bowman-Birk type trypsin-chymotrypsin inhibitor (BBI). Serine protease. May be involved in the invasion of grains and hydrolysis of grain proteins. This Fusarium culmorum protein is Alkaline proteinase.